Consider the following 318-residue polypeptide: Olfactory receptor 13C2 (318 aa).

Topologically, residues 1–25 (MEWENHTILVEFFLKGLSGHPRLEL) are extracellular. N-linked (GlcNAc...) asparagine glycosylation is present at asparagine 5. A helical membrane pass occupies residues 26–46 (LFFVLIFIMYVVILLGNGTLI). Over 47–54 (LISILDPH) the chain is Cytoplasmic. A helical transmembrane segment spans residues 55–75 (LHTPMYFFLGNLSFLDICYTT). At 76–99 (TSIPSTLVSFLSERKTISLSGCAV) the chain is on the extracellular side. Cysteine 97 and cysteine 189 are oxidised to a cystine. The chain crosses the membrane as a helical span at residues 100-120 (QMFLGLAMGTTECVLLGMMAF). The Cytoplasmic portion of the chain corresponds to 121–139 (DRYVAICNPLRYPIIMSKD). The helical transmembrane segment at 140–160 (AYVPMAAGSWIIGAVNSAVQS) threads the bilayer. Residues 161–197 (VFVVQLPFCRNNIINHFTCEILAVMKLACADISDNEF) are Extracellular-facing. Residues 198–217 (IMLVATTLFILTPLLLIIVS) form a helical membrane-spanning segment. Residues 218-237 (YTLIIVSIFKISSSEGRSKA) lie on the Cytoplasmic side of the membrane. A helical membrane pass occupies residues 238–258 (SSTCSAHLTVVIIFYGTILFM). Residues 259-277 (YMKPKSKETLNSDDLDATD) are Extracellular-facing. Residues 278 to 298 (KIISMFYGVMTPMMNPLIYSL) form a helical membrane-spanning segment. Residues 299 to 318 (RNKDVKEAVKHLLNRRFFSK) are Cytoplasmic-facing.

Belongs to the G-protein coupled receptor 1 family.

Its subcellular location is the cell membrane. Its function is as follows. Odorant receptor. This Homo sapiens (Human) protein is Olfactory receptor 13C2 (OR13C2).